The chain runs to 350 residues: LIM domain-containing protein unc-95 (350 aa).

Residues 1-37 show a composition bias toward polar residues; it reads MTISPQPSHQQFESYQWTTESRSSQQRHGTGTPSQDG. A disordered region spans residues 1–65; that stretch reads MTISPQPSHQ…ESRNSNKDKV (65 aa). Over residues 45-65 the composition is skewed to basic and acidic residues; sequence PVERHVARWRSESRNSNKDKV. A coiled-coil region spans residues 83-110; that stretch reads LTALKNDVEQTTEIIRRKQEQMRMERRQ. Disordered stretches follow at residues 177–198, 206–225, and 235–262; these read RRGQ…EIEY, PEEQ…METD, and MSEE…SGSP. The region spanning 268–334 is the LIM zinc-binding domain; that stretch reads AVCAYCSEEI…HDCFYKLYNG (67 aa).

Post-translationally, ubiquitinated. Ubiquitination by rnf-5 leads to dissociation from muscle dense bodies during molting and is required for ecdysis. As to expression, expressed in the body wall muscles, vulval muscles and the anal muscles. Expressed in the muscle arms of the head muscle cells that form neuromuscular junctions and in the anal depressor muscle.

Its subcellular location is the cytoplasm. It localises to the nucleus. It is found in the cell membrane. The protein localises to the myofibril. The protein resides in the sarcomere. Its subcellular location is the m line. It localises to the cell junction. It is found in the focal adhesion. Required for the assembly and integrity of muscle dense bodies, which establish the adhesion sites of the muscle cells to the extracellular matrix. Decreased localization of unc-95 to dense bodies and their subsequent dissociation plays an important role in ecdysis during molting. Involved in the organization of the muscle sarcomeric structure and thereby required for locomotion. This Caenorhabditis elegans protein is LIM domain-containing protein unc-95.